Consider the following 382-residue polypeptide: MTANLLDFDLDGLAVFCERLGEKRYRAVQLFRWIHQKGASNFDDMSDLAKSLREKLKVSAQVKAPDLISQHISSDGTIKWLFDVGGGDAVEAVFIPEEDRGTLCISSQAGCAMGCRFCSTGHQGFSRNLKTGEIIAQLWFAEHFLRKHLQRDERVISNVVMMGMGEPLQNYAELVPALRAMLDDHGYGLSRRRVTVSTSGVVPMMDRLARDCPVALAVSLHAPNDLLRDDLVPLNKKYSLAELLNACNRYLAYAPRDFITFEYCMLEDVNDQPEHAQQLVRLVQHYSSGGVWCKFNLIPFNPFPASGLTRSTPERIQAFAKILSDAGIVTTIRKTRGDDIDAACGQLAGEVKDRTRVGERIARQRTFMLKPVSEINTQVKEN.

The active-site Proton acceptor is Glu91. Positions 97 to 339 (EEDRGTLCIS…TTIRKTRGDD (243 aa)) constitute a Radical SAM core domain. Residues Cys104 and Cys344 are joined by a disulfide bond. 3 residues coordinate [4Fe-4S] cluster: Cys111, Cys115, and Cys118. S-adenosyl-L-methionine contacts are provided by residues 165–166 (GE), Ser197, 219–221 (SLH), and Asn301. Residue Cys344 is the S-methylcysteine intermediate of the active site.

This sequence belongs to the radical SAM superfamily. RlmN family. The cofactor is [4Fe-4S] cluster.

It is found in the cytoplasm. It carries out the reaction adenosine(2503) in 23S rRNA + 2 reduced [2Fe-2S]-[ferredoxin] + 2 S-adenosyl-L-methionine = 2-methyladenosine(2503) in 23S rRNA + 5'-deoxyadenosine + L-methionine + 2 oxidized [2Fe-2S]-[ferredoxin] + S-adenosyl-L-homocysteine. The catalysed reaction is adenosine(37) in tRNA + 2 reduced [2Fe-2S]-[ferredoxin] + 2 S-adenosyl-L-methionine = 2-methyladenosine(37) in tRNA + 5'-deoxyadenosine + L-methionine + 2 oxidized [2Fe-2S]-[ferredoxin] + S-adenosyl-L-homocysteine. Functionally, specifically methylates position 2 of adenine 2503 in 23S rRNA and position 2 of adenine 37 in tRNAs. m2A2503 modification seems to play a crucial role in the proofreading step occurring at the peptidyl transferase center and thus would serve to optimize ribosomal fidelity. In Albidiferax ferrireducens (strain ATCC BAA-621 / DSM 15236 / T118) (Rhodoferax ferrireducens), this protein is Dual-specificity RNA methyltransferase RlmN.